Consider the following 87-residue polypeptide: Putative regulatory protein CHY_1489 (87 aa).

Belongs to the RemA family.

The protein is Putative regulatory protein CHY_1489 of Carboxydothermus hydrogenoformans (strain ATCC BAA-161 / DSM 6008 / Z-2901).